Here is a 75-residue protein sequence, read N- to C-terminus: Large ribosomal subunit protein bL31 (75 aa).

It belongs to the bacterial ribosomal protein bL31 family. Type A subfamily. As to quaternary structure, part of the 50S ribosomal subunit.

Its function is as follows. Binds the 23S rRNA. The sequence is that of Large ribosomal subunit protein bL31 from Zymomonas mobilis subsp. mobilis (strain ATCC 31821 / ZM4 / CP4).